The sequence spans 254 residues: Thiazole synthase (254 aa).

Lys95 functions as the Schiff-base intermediate with DXP in the catalytic mechanism. Residues Gly156, 182 to 183, and 204 to 205 contribute to the 1-deoxy-D-xylulose 5-phosphate site; these read AG and NT.

Belongs to the ThiG family. In terms of assembly, homotetramer. Forms heterodimers with either ThiH or ThiS.

It localises to the cytoplasm. The catalysed reaction is [ThiS sulfur-carrier protein]-C-terminal-Gly-aminoethanethioate + 2-iminoacetate + 1-deoxy-D-xylulose 5-phosphate = [ThiS sulfur-carrier protein]-C-terminal Gly-Gly + 2-[(2R,5Z)-2-carboxy-4-methylthiazol-5(2H)-ylidene]ethyl phosphate + 2 H2O + H(+). It functions in the pathway cofactor biosynthesis; thiamine diphosphate biosynthesis. Functionally, catalyzes the rearrangement of 1-deoxy-D-xylulose 5-phosphate (DXP) to produce the thiazole phosphate moiety of thiamine. Sulfur is provided by the thiocarboxylate moiety of the carrier protein ThiS. In vitro, sulfur can be provided by H(2)S. The chain is Thiazole synthase from Shewanella baltica (strain OS195).